A 1179-amino-acid polypeptide reads, in one-letter code: ATP-dependent helicase/deoxyribonuclease subunit B (1179 aa).

This sequence belongs to the helicase family. AddB/RexB type 2 subfamily. As to quaternary structure, heterodimer of AddA and RexB. Mg(2+) serves as cofactor.

Functionally, the heterodimer acts as both an ATP-dependent DNA helicase and an ATP-dependent, dual-direction single-stranded exonuclease. Recognizes the chi site generating a DNA molecule suitable for the initiation of homologous recombination. This subunit has 5' -&gt; 3' nuclease activity but not helicase activity. This is ATP-dependent helicase/deoxyribonuclease subunit B from Lactobacillus delbrueckii subsp. bulgaricus (strain ATCC 11842 / DSM 20081 / BCRC 10696 / JCM 1002 / NBRC 13953 / NCIMB 11778 / NCTC 12712 / WDCM 00102 / Lb 14).